A 330-amino-acid chain; its full sequence is 6-methylsalicylic acid decarboxylase acuB (330 aa).

Residues histidine 6, histidine 8, histidine 156, and aspartate 276 each contribute to the Zn(2+) site.

It belongs to the metallo-dependent hydrolases superfamily. ACMSD family. Monomer.

The protein localises to the cytoplasm. It localises to the cytosol. It catalyses the reaction 6-methylsalicylate + H(+) = 3-methylphenol + CO2. It functions in the pathway secondary metabolite biosynthesis. In terms of biological role, 6-methylsalicylic acid decarboxylase; part of the gene cluster that mediates the biosynthesis of aculins. The pathway begins with the synthesis of 6-methylsalicylic acid by the polyketide synthase (PKS) acuA via condensation of acetate and malonate units. The 6-methylsalicylic acid decarboxylase acuB then catalyzes the decarboxylation of 6-methylsalicylic acid to yield m-cresol (also known as 3-methylphenol). These first reactions occur in the cytosol. The intermediate m-cresol is then transported into the endoplasmic reticulum where the cytochrome P450 monooxygenase acuC converts it to m-hydroxybenzyl alcohol, which is further converted to gentisyl alcohol by the cytochrome P450 monooxygenase acuD. Gentisyl alcohol is further oxidized by the oxidoreductase acuE that probably catalyzes hydroxylation of the aromatic ring. The aromatic system might then be opened by oxidation through a Baeyer-Villiger type of oxidation, which could be catalyzed by acuF, with the carboxylic acid at C-1 subsequently reduced to an aldehyde by acuG. Subsequently, a hemiacetal is formed, before the dehydrogenase acuH would reduce the double bond between C-4 and C-6. Finally, keto-enol tautomerism results in formation of aculinic acid, which exists as two diastereomers (both R/S configurations at C-1) by non-enzymatic hemiacetal formation. The carboxypeptidase acuI could be involved in the linking of aculinic acid to an aculene A moiety produced by the aculene biosynthesis cluster and which leads to the production of aculin A. AcuI may also be involved in the attachment of proline to aculinic acid to form epi-aculins A and B. The protein is 6-methylsalicylic acid decarboxylase acuB of Aspergillus aculeatus (strain ATCC 16872 / CBS 172.66 / WB 5094).